A 179-amino-acid polypeptide reads, in one-letter code: Large ribosomal subunit protein uL5 (179 aa).

It belongs to the universal ribosomal protein uL5 family. Part of the 50S ribosomal subunit; part of the 5S rRNA/L5/L18/L25 subcomplex. Contacts the 5S rRNA and the P site tRNA. Forms a bridge to the 30S subunit in the 70S ribosome.

In terms of biological role, this is one of the proteins that bind and probably mediate the attachment of the 5S RNA into the large ribosomal subunit, where it forms part of the central protuberance. In the 70S ribosome it contacts protein S13 of the 30S subunit (bridge B1b), connecting the 2 subunits; this bridge is implicated in subunit movement. Contacts the P site tRNA; the 5S rRNA and some of its associated proteins might help stabilize positioning of ribosome-bound tRNAs. The chain is Large ribosomal subunit protein uL5 from Rickettsia felis (strain ATCC VR-1525 / URRWXCal2) (Rickettsia azadi).